An 84-amino-acid chain; its full sequence is Agaphelin (84 aa).

An N-terminal signal peptide occupies residues 1-26; the sequence is MKMRVHLLAVSVLLVVLALQTTPAEA. Positions 29–82 constitute a Kazal-like domain; the sequence is NSEMATCACQLIYRPVCASNNESYSNECVLKCASETPTGRSIGLHKVKDGNCNG. Cystine bridges form between C35-C60, C37-C56, and C45-C80. An N-linked (GlcNAc...) asparagine glycan is attached at N49.

Interacts with human ELANE.

Its subcellular location is the secreted. In terms of biological role, functions as a slow and tight inhibitor of host neutrophil elastase (ELANE). Inhibits host proteinase 3 (PRTN3) and chymotrypsin. Does not inhibit other host proteases involved in coagulation or inflammation, such as cathepsin G (CTSG), trypsin, chymase, matriptase, beta-tryptase, kallikrein, urokinase-type plasminogen activator (PLAU), coagulation factors Xa (F10), XIa (F11), XIIa (F12), plasmin (PLG), thrombin (F2) and tissue-type plasminogen activator (PLAT). Inhibits host neutrophil chemotaxis induced by N-formylmethionine-leucyl-phenylalanine (fMLP) in vitro. Inhibits ELANE-mediated potentiation of platelet aggregation induced by CTSG in the host. Does not affect CTSG- or collagen-induced platelet aggregation. Blocks cleavage of tissue factor pathway inhibitor (TFPI) by ELANE in the host. Inhibits neutrophil-induced coagulation in the host by interfering with neutrophil extracellular traps (NET) formation. Exhibits anti-inflammatory activity. Reduces ischemia-induced activation of MAPK and NF-kappa-B pathways in the host. Decreases CCL2 and IL8 production in IL4- or lipopolysaccharide (LPS)-stimulated host epithelial cells. Reduces caspase-3 (CASP3)-dependent apoptosis in damaged host tissues. This chain is Agaphelin, found in Anopheles gambiae (African malaria mosquito).